Consider the following 403-residue polypeptide: DNA primase DnaG (403 aa).

The 77-residue stretch at 172–248 folds into the Toprim domain; it reads DSVIIVEGRA…HIDYIARAPP (77 aa). Mg(2+) contacts are provided by glutamate 178, aspartate 222, and aspartate 224. The interval 279–300 is disordered; it reads AAGEKTEAPAQPTQQQPPPAEA.

This sequence belongs to the archaeal DnaG primase family. As to quaternary structure, forms a ternary complex with MCM helicase and DNA. Component of the archaeal exosome complex. Mg(2+) is required as a cofactor.

It catalyses the reaction ssDNA + n NTP = ssDNA/pppN(pN)n-1 hybrid + (n-1) diphosphate.. Its function is as follows. RNA polymerase that catalyzes the synthesis of short RNA molecules used as primers for DNA polymerase during DNA replication. Also part of the exosome, which is a complex involved in RNA degradation. Acts as a poly(A)-binding protein that enhances the interaction between heteromeric, adenine-rich transcripts and the exosome. This chain is DNA primase DnaG, found in Pyrobaculum neutrophilum (strain DSM 2338 / JCM 9278 / NBRC 100436 / V24Sta) (Thermoproteus neutrophilus).